The sequence spans 288 residues: 4-hydroxybenzoate octaprenyltransferase (288 aa).

8 helical membrane passes run 23 to 43 (IGSL…GRGI), 46 to 66 (AKIL…GCVV), 98 to 118 (ILFV…NSMT), 141 to 161 (LPQV…FAAV), 163 to 183 (ESLP…TVAY), 213 to 233 (LIIG…GWLM), 234 to 254 (NLGG…THQQ), and 268 to 288 (AFLN…ISYW).

This sequence belongs to the UbiA prenyltransferase family. Requires Mg(2+) as cofactor.

The protein localises to the cell inner membrane. The enzyme catalyses all-trans-octaprenyl diphosphate + 4-hydroxybenzoate = 4-hydroxy-3-(all-trans-octaprenyl)benzoate + diphosphate. It participates in cofactor biosynthesis; ubiquinone biosynthesis. In terms of biological role, catalyzes the prenylation of para-hydroxybenzoate (PHB) with an all-trans polyprenyl group. Mediates the second step in the final reaction sequence of ubiquinone-8 (UQ-8) biosynthesis, which is the condensation of the polyisoprenoid side chain with PHB, generating the first membrane-bound Q intermediate 3-octaprenyl-4-hydroxybenzoate. The polypeptide is 4-hydroxybenzoate octaprenyltransferase (Yersinia pseudotuberculosis serotype O:1b (strain IP 31758)).